The primary structure comprises 515 residues: Sphingolipid 10-desaturase (515 aa).

The helical transmembrane segment at 3–23 threads the bilayer; sequence AVWALLWALQLGTLVGCALVL. The 68-residue stretch at 46–113 folds into the Cytochrome b5 heme-binding domain; the sequence is AKPISDQKAA…DISFVFRVMH (68 aa). The heme site is built by histidine 90 and histidine 113. Residues 198–218 form a helical membrane-spanning segment; that stretch reads TWLLWNTAVLISIIALSVISM. The short motif at 245–249 is the Histidine box-1 element; that stretch reads HDAEH. A helical membrane pass occupies residues 258-278; it reads LNDILGWIYGTVFLGVNGAWW. Residues 281–286 carry the Histidine box-2 motif; sequence EHREHH. Transmembrane regions (helical) follow at residues 322-342, 359-379, and 382-402; these read IIHF…FIVG, PWTI…LSQT, and PIPV…QLLG. A Histidine box-3 motif is present at residues 447–451; the sequence is HYSHH.

Belongs to the fatty acid desaturase type 1 family. Fe(2+) is required as a cofactor.

It localises to the membrane. It carries out the reaction a (4E,8E)-4-sphinga-4,8-dienine ceramide + 2 Fe(II)-[cytochrome b5] + O2 + 2 H(+) = an N-acyl-(4E,8E,10E)-sphingatrienine + 2 Fe(III)-[cytochrome b5] + 2 H2O. It participates in lipid metabolism; sphingolipid metabolism. Its function is as follows. Fatty acid desaturase that catalyzes the introduction of the third double bond at the Delta(10) position in d18:3Delta4,8,10 triunsaturated sphingolipid long fatty acid chains. The cytochrome b5 domain probably acts as the direct electron donor to the active site of the desaturase. This is Sphingolipid 10-desaturase from Thalassiosira pseudonana (Marine diatom).